We begin with the raw amino-acid sequence, 550 residues long: Glypican-1 (550 aa).

Residues 1–20 (MRFFPWGFWLLCVASAPARG) form the signal peptide. Cystine bridges form between C29-C65, C59-C253, C66-C256, C188-C340, C243-C276, C265-C412, and C269-C398. N-linked (GlcNAc...) asparagine glycosylation is found at N76 and N113. N-linked (GlcNAc...) asparagine glycosylation occurs at N382. 2 disordered regions span residues 475–494 (FQDA…CPDD) and 502–522 (KSPS…GHGV). Over residues 481 to 494 (DMSGSGSGDSCPDD) the composition is skewed to low complexity. O-linked (Xyl...) (heparan sulfate) serine glycosylation is found at S483, S485, and S487. The GPI-anchor amidated glycine moiety is linked to residue G524. A propeptide spans 525-550 (ASSRSLPSAFLLFLSGASIVVQHLWR) (removed in mature form).

It belongs to the glypican family. Post-translationally, O-glycosylated with heparan sulfate.

The protein resides in the cell membrane. It localises to the endosome. The protein localises to the secreted. Its subcellular location is the extracellular space. In terms of biological role, cell surface proteoglycan that bears heparan sulfate. Modulates Wnt-signaling pathway. The chain is Glypican-1 (GPC1) from Gallus gallus (Chicken).